The sequence spans 834 residues: Glycerol-3-phosphate acyltransferase (834 aa).

An HXXXXD motif motif is present at residues 309-314 (CHRSHI).

The protein belongs to the GPAT/DAPAT family.

Its subcellular location is the cell inner membrane. It catalyses the reaction sn-glycerol 3-phosphate + an acyl-CoA = a 1-acyl-sn-glycero-3-phosphate + CoA. It participates in phospholipid metabolism; CDP-diacylglycerol biosynthesis; CDP-diacylglycerol from sn-glycerol 3-phosphate: step 1/3. This Pseudomonas aeruginosa (strain LESB58) protein is Glycerol-3-phosphate acyltransferase.